A 181-amino-acid chain; its full sequence is MKFLFDYFPIICFFVAYKFWGIYIATAAAMVVSALQVAIYWIRFRRFEKFHVITLIFILLLGSFTLVFHNAIFIKWKPTIVYWIFAIVLFGSHFFGKHTLVHRMLKEKIELPAKTWSRLNLSWALFFLILGVLNLFVVYNFDTNTWVNFKLFGTLVLMLVFILGQAFYIARHAQNLKMNSR.

5 consecutive transmembrane segments (helical) span residues 8–28 (FPII…ATAA), 53–73 (ITLI…NAIF), 76–96 (WKPT…HFFG), 121–141 (LSWA…VYNF), and 149–169 (FKLF…AFYI).

It belongs to the YciB family.

Its subcellular location is the cell inner membrane. Its function is as follows. Plays a role in cell envelope biogenesis, maintenance of cell envelope integrity and membrane homeostasis. This chain is Inner membrane-spanning protein YciB, found in Coxiella burnetii (strain CbuG_Q212) (Coxiella burnetii (strain Q212)).